The sequence spans 1362 residues: Insulin receptor (1362 aa).

The first 37 residues, 1–37 (MGQGVLRGEGHPNNNPNSKVGWKSLVGIITIFMLILC), serve as a signal peptide directing secretion. Positions 38–184 (DQSDGKICYS…DSVEDNYIEL (147 aa)) are leucine-rich region. C45 and C63 are oxidised to a cystine. Residues N53, N115, and N148 are each glycosylated (N-linked (GlcNAc...) asparagine). 14 disulfides stabilise this stretch: C163/C192, C196/C219, C206/C225, C229/C238, C233/C244, C245/C253, C249/C262, C265/C274, C278/C290, C296/C321, C303/C311, C325/C338, C341/C345, and C349/C370. N332 carries an N-linked (GlcNAc...) asparagine glycan. N-linked (GlcNAc...) asparagine glycans are attached at residues N374, N434, and N455. A disulfide bond links C472 and C505. Fibronectin type-III domains lie at 508–629 (NLLT…TNET) and 633–730 (VPLD…IQKE). Residues N551, N627, N642, N660, and N707 are each glycosylated (N-linked (GlcNAc...) asparagine). Disulfide bonds link C683-C896 and C822-C830. A disordered region spans residues 694 to 714 (WTPPTEIDENGNENQTEHTSV). A compositionally biased stretch (polar residues) spans 705–714 (NENQTEHTSV). The tract at residues 741–749 (ENYLHNEVF) is insulin-binding. At 759-951 (DLFGVANGTL…PDHPHSNIVK (193 aa)) the chain is on the extracellular side. N765 and N779 each carry an N-linked (GlcNAc...) asparagine glycan. The Fibronectin type-III 3 domain occupies 849–944 (VVGPITYEYV…EQAYFQVPDH (96 aa)). N-linked (GlcNAc...) asparagine glycosylation is found at N917 and N930. The helical transmembrane segment at 952–972 (IITGPIIAVFLLLIVLVYCVV) threads the bilayer. At 973–1362 (QKKKDAEGPA…ILSLPRSSPS (390 aa)) the chain is on the cytoplasmic side. Y993 is modified (phosphotyrosine; by autocatalysis). The 276-residue stretch at 1012–1287 (INLLRELGQG…MLKDDLRPSF (276 aa)) folds into the Protein kinase domain. Residues S1022, K1046, and 1093 to 1099 (ELMAHGD) each bind ATP. D1148 acts as the Proton donor/acceptor in catalysis. Residues 1152 to 1153 (RN) and D1166 each bind ATP. A phosphotyrosine; by autocatalysis mark is found at Y1174, Y1178, Y1179, Y1335, and Y1341.

It belongs to the protein kinase superfamily. Tyr protein kinase family. Insulin receptor subfamily. In terms of assembly, tetramer of 2 alpha and 2 beta chains linked by disulfide bonds. The alpha chains contribute to the formation of the ligand-binding domain, while the beta chains carry the kinase domain. In terms of processing, autophosphorylated on tyrosine residues in response to insulin. As to expression, localized mainly to the envelope in oocytes. Localized to the animal hemisphere during early embryonic cleavage. Expressed during organogenesis in regions of ecto- and mesodermic origins. Expressed in the entire encephalon, the otic and optic vesicles, the gills, the somites and the pronephric tubules of the embryo. Also found in adult liver, muscle and regenerated forelimbs.

The protein localises to the cell membrane. The catalysed reaction is L-tyrosyl-[protein] + ATP = O-phospho-L-tyrosyl-[protein] + ADP + H(+). With respect to regulation, autophosphorylation activates the kinase activity. Its function is as follows. Receptor tyrosine kinase which mediates actions of insulin. May be required for forelimb regeneration. This chain is Insulin receptor (insr), found in Xenopus laevis (African clawed frog).